A 78-amino-acid polypeptide reads, in one-letter code: UPF0335 protein RBE_1185 (78 aa).

This sequence belongs to the UPF0335 family.

The chain is UPF0335 protein RBE_1185 from Rickettsia bellii (strain RML369-C).